The chain runs to 1373 residues: DNA-directed RNA polymerase subunit beta (1373 aa).

The protein belongs to the RNA polymerase beta chain family. As to quaternary structure, the RNAP catalytic core consists of 2 alpha, 1 beta, 1 beta' and 1 omega subunit. When a sigma factor is associated with the core the holoenzyme is formed, which can initiate transcription.

The enzyme catalyses RNA(n) + a ribonucleoside 5'-triphosphate = RNA(n+1) + diphosphate. In terms of biological role, DNA-dependent RNA polymerase catalyzes the transcription of DNA into RNA using the four ribonucleoside triphosphates as substrates. The chain is DNA-directed RNA polymerase subunit beta from Rickettsia akari (strain Hartford).